We begin with the raw amino-acid sequence, 632 residues long: MADQRMDISSTISDFMSPGPTDLLSGSLGTSGVDCNRKRKGSATDYQLDDFAFEESMDTDKDDPHGRLEYAEHQGRIKNAREAHSQIEKRRRDKMNSFIDELASLVPTCNAMSRKLDKLTVLRMAVQHMKTLRGATNPYTEANYKPTFLSDDELKHLILRAADGFLFVVGCDRGKILFVSESVFKILNYSQNDLIGQSLFDYLHPKDIAKVKEQLSSSDTAPRERLIDAKTGLPVKTDITPGPSRLCSGARRSFFCRMKCNRPSVKVEDKDFASTCSKKKDRKSFCTIHSTGYLKSWPPTKMGLDEDNEPDNEGCNLSCLVAIGRLHSHMVPQPANGEIRVKSMEYVSRHAIDGKFVFVDQRATAILAYLPQELLGTSCYEYFHQDDIGHLAECHRQVLQTREKITTNCYKFKIKDGSFITLRSRWFSFMNPWTKEVEYIVSTNTVVLANVLEGGDPTFPQLTAPPHSMDSMLPSGEGGPKRTHPTVPGIPGGTRAGAGKIGRMIAEEIMEIHRIRGSSPSSCGSSPLNITSTPPPDASSPGGKKILNGGTPDIPSTGLLPGQAQETPGYPYSDSSSILGENPHIGIDMIDNDQGSSSPSNDEAAMAVIMSLLEADAGLGGPVDFSDLPWPL.

The segment at 1–39 (MADQRMDISSTISDFMSPGPTDLLSGSLGTSGVDCNRKR) is disordered. Phosphoserine; by GSK3-beta is present on serine 17. Threonine 21 is modified (phosphothreonine; by GSK3-beta). The Nuclear localization signal motif lies at 36 to 41 (NRKRKG). The region spanning 79 to 132 (NAREAHSQIEKRRRDKMNSFIDELASLVPTCNAMSRKLDKLTVLRMAVQHMKTL) is the bHLH domain. Serine 85 carries the post-translational modification Phosphoserine. Serine 97 bears the Phosphoserine; by CK2 mark. A Nuclear export signal 1 motif is present at residues 149 to 159 (LSDDELKHLIL). Residues 150-222 (SDDELKHLIL…EQLSSSDTAP (73 aa)) form the PAS 1 domain. Lysine 259 participates in a covalent cross-link: Glycyl lysine isopeptide (Lys-Gly) (interchain with G-Cter in SUMO2 and SUMO3). A Glycyl lysine isopeptide (Lys-Gly) (interchain with G-Cter in SUMO); alternate cross-link involves residue lysine 266. Residue lysine 266 forms a Glycyl lysine isopeptide (Lys-Gly) (interchain with G-Cter in SUMO2); alternate linkage. Positions 333–403 (QPANGEIRVK…CHRQVLQTRE (71 aa)) constitute a PAS 2 domain. Residues 367 to 375 (LAYLPQELL) carry the Nuclear export signal 2 motif. The PAC domain maps to 408-451 (NCYKFKIKDGSFITLRSRWFSFMNPWTKEVEYIVSTNTVVLANV). 2 disordered regions span residues 465-498 (PPHSMDSMLPSGEGGPKRTHPTVPGIPGGTRAGA) and 517-601 (GSSP…SPSN). The interval 514-594 (RIRGSSPSSC…IGIDMIDNDQ (81 aa)) is interaction with CIART. Positions 517 to 527 (GSSPSSCGSSP) are enriched in low complexity. An N6-acetyllysine modification is found at lysine 544.

Component of the circadian clock oscillator which includes the CRY1/2 proteins, CLOCK or NPAS2, BMAL1 or BMAL2, CSNK1D and/or CSNK1E, TIMELESS and the PER1/2/3 proteins. Forms a heterodimer with CLOCK. The CLOCK-BMAL1 heterodimer is required for E-box-dependent transactivation, for CLOCK nuclear translocation and degradation, and, for phosphorylation of both CLOCK and BMAL1. Part of a nuclear complex which also includes RACK1 and PRKCA; RACK1 and PRKCA are recruited to the complex in a circadian manner. Interacts with NPAS2. Interacts with EZH2. Interacts with SUMO3. Interacts with SIRT1. Interacts with AHR. Interacts with ID1, ID2 and ID3. Interacts with DDX4. Interacts with OGT. Interacts with EED and SUZ12. Interacts with MTA1. Interacts with CIART. Interacts with HSP90. Interacts with KAT2B and EP300. Interacts with BHLHE40/DEC1 and BHLHE41/DEC2. Interacts with RELB and the interaction is enhanced in the presence of CLOCK. Interacts with PER1, PER2, CRY1 and CRY2 and this interaction requires a translocation to the nucleus. Interaction of the CLOCK-BMAL1 heterodimer with PER or CRY inhibits transcription activation. Interaction of the CLOCK-BMAL1 with CRY1 is independent of DNA but with PER2 is off DNA. The CLOCK-BMAL1 heterodimer interacts with GSK3B. Interacts with KDM5A. Interacts with KMT2A; in a circadian manner. Interacts with UBE3A. Interacts with PRKCG. Interacts with MAGEL2. Interacts with NCOA2. Interacts with THRAP3. The CLOCK-BMAL1 heterodimer interacts with PASD1. Interacts with PASD1. Interacts with USP9X. Interacts with PIWIL2 (via PIWI domain). Interacts with HDAC3. Interacts with HNF4A. In terms of processing, ubiquitinated, leading to its proteasomal degradation. Deubiquitinated by USP9X. Post-translationally, O-glycosylated; contains O-GlcNAc. O-glycosylation by OGT prevents protein degradation by inhibiting ubiquitination. It also stabilizes the CLOCK-BMAL1 heterodimer thereby increasing CLOCK-BMAL1-mediated transcription of genes in the negative loop of the circadian clock such as PER1/2/3 and CRY1/2. Acetylated on Lys-544 by CLOCK during the repression phase of the circadian cycle. Acetylation facilitates recruitment of CRY1 protein and initiates the repression phase of the circadian cycle. Acetylated at Lys-544 by KAT5 during the activation phase of the cycle, leading to recruitment of the positive transcription elongation factor b (P-TEFb) and BRD4, followed by productive elongation of circadian transcripts. Deacetylated by SIRT1, which may result in decreased protein stability. In terms of processing, phosphorylated upon dimerization with CLOCK. Phosphorylation enhances the transcriptional activity, alters the subcellular localization and decreases the stability of the CLOCK-BMAL1 heterodimer by promoting its degradation. Phosphorylation shows circadian variations in the liver with a peak between CT10 to CT14. Phosphorylation at Ser-97 by CK2 is essential for its nuclear localization, its interaction with CLOCK and controls CLOCK nuclear entry. Dephosphorylation at Ser-85 is important for dimerization with CLOCK and transcriptional activity. Post-translationally, sumoylated on Lys-266 upon dimerization with CLOCK. Predominantly conjugated to poly-SUMO2/3 rather than SUMO1 and the level of these conjugates undergo rhythmic variation, peaking at CT9-CT12. Sumoylation localizes it exclusively to the PML body and promotes its ubiquitination in the PML body, ubiquitin-dependent proteasomal degradation and the transcriptional activity of the CLOCK-BMAL1 heterodimer. Undergoes lysosome-mediated degradation in a time-dependent manner in the liver. Expressed in liver and testis (at protein level). Expressed in the suprachiasmatic nucleus (SCN) in a circadian manner.

The protein localises to the nucleus. The protein resides in the cytoplasm. It is found in the PML body. With respect to regulation, the redox state of the cell can modulate the transcriptional activity of the CLOCK-BMAL1 and NPAS2-BMAL1 heterodimers; NADH and NADPH enhance the DNA-binding activity of the heterodimers. In terms of biological role, transcriptional activator which forms a core component of the circadian clock. The circadian clock, an internal time-keeping system, regulates various physiological processes through the generation of approximately 24 hour circadian rhythms in gene expression, which are translated into rhythms in metabolism and behavior. It is derived from the Latin roots 'circa' (about) and 'diem' (day) and acts as an important regulator of a wide array of physiological functions including metabolism, sleep, body temperature, blood pressure, endocrine, immune, cardiovascular, and renal function. Consists of two major components: the central clock, residing in the suprachiasmatic nucleus (SCN) of the brain, and the peripheral clocks that are present in nearly every tissue and organ system. Both the central and peripheral clocks can be reset by environmental cues, also known as Zeitgebers (German for 'timegivers'). The predominant Zeitgeber for the central clock is light, which is sensed by retina and signals directly to the SCN. The central clock entrains the peripheral clocks through neuronal and hormonal signals, body temperature and feeding-related cues, aligning all clocks with the external light/dark cycle. Circadian rhythms allow an organism to achieve temporal homeostasis with its environment at the molecular level by regulating gene expression to create a peak of protein expression once every 24 hours to control when a particular physiological process is most active with respect to the solar day. Transcription and translation of core clock components (CLOCK, NPAS2, BMAL1, BMAL2, PER1, PER2, PER3, CRY1 and CRY2) plays a critical role in rhythm generation, whereas delays imposed by post-translational modifications (PTMs) are important for determining the period (tau) of the rhythms (tau refers to the period of a rhythm and is the length, in time, of one complete cycle). A diurnal rhythm is synchronized with the day/night cycle, while the ultradian and infradian rhythms have a period shorter and longer than 24 hours, respectively. Disruptions in the circadian rhythms contribute to the pathology of cardiovascular diseases, cancer, metabolic syndromes and aging. A transcription/translation feedback loop (TTFL) forms the core of the molecular circadian clock mechanism. Transcription factors, CLOCK or NPAS2 and BMAL1 or BMAL2, form the positive limb of the feedback loop, act in the form of a heterodimer and activate the transcription of core clock genes and clock-controlled genes (involved in key metabolic processes), harboring E-box elements (5'-CACGTG-3') within their promoters. The core clock genes: PER1/2/3 and CRY1/2 which are transcriptional repressors form the negative limb of the feedback loop and interact with the CLOCK|NPAS2-BMAL1|BMAL2 heterodimer inhibiting its activity and thereby negatively regulating their own expression. This heterodimer also activates nuclear receptors NR1D1/2 and RORA/B/G, which form a second feedback loop and which activate and repress BMAL1 transcription, respectively. BMAL1 positively regulates myogenesis and negatively regulates adipogenesis via the transcriptional control of the genes of the canonical Wnt signaling pathway. Plays a role in normal pancreatic beta-cell function; regulates glucose-stimulated insulin secretion via the regulation of antioxidant genes NFE2L2/NRF2 and its targets SESN2, PRDX3, CCLC and CCLM. Negatively regulates the mTORC1 signaling pathway; regulates the expression of MTOR and DEPTOR. Controls diurnal oscillations of Ly6C inflammatory monocytes; rhythmic recruitment of the PRC2 complex imparts diurnal variation to chemokine expression that is necessary to sustain Ly6C monocyte rhythms. Regulates the expression of HSD3B2, STAR, PTGS2, CYP11A1, CYP19A1 and LHCGR in the ovary and also the genes involved in hair growth. Plays an important role in adult hippocampal neurogenesis by regulating the timely entry of neural stem/progenitor cells (NSPCs) into the cell cycle and the number of cell divisions that take place prior to cell-cycle exit. Regulates the circadian expression of CIART and KLF11. The CLOCK-BMAL1 heterodimer regulates the circadian expression of SERPINE1/PAI1, VWF, B3, CCRN4L/NOC, NAMPT, DBP, MYOD1, PPARGC1A, PPARGC1B, SIRT1, GYS2, F7, NGFR, GNRHR, BHLHE40/DEC1, ATF4, MTA1, KLF10 and also genes implicated in glucose and lipid metabolism. Promotes rhythmic chromatin opening, regulating the DNA accessibility of other transcription factors. May play a role in spermatogenesis; contributes to the chromatoid body assembly and physiology. The NPAS2-BMAL1 heterodimer positively regulates the expression of MAOA, F7 and LDHA and modulates the circadian rhythm of daytime contrast sensitivity by regulating the rhythmic expression of adenylate cyclase type 1 (ADCY1) in the retina. The preferred binding motif for the CLOCK-BMAL1 heterodimer is 5'-CACGTGA-3', which contains a flanking adenine nucleotide at the 3-prime end of the canonical 6-nucleotide E-box sequence. CLOCK specifically binds to the half-site 5'-CAC-3', while BMAL1 binds to the half-site 5'-GTGA-3'. The CLOCK-BMAL1 heterodimer also recognizes the non-canonical E-box motifs 5'-AACGTGA-3' and 5'-CATGTGA-3'. Essential for the rhythmic interaction of CLOCK with ASS1 and plays a critical role in positively regulating CLOCK-mediated acetylation of ASS1. Plays a role in protecting against lethal sepsis by limiting the expression of immune checkpoint protein CD274 in macrophages in a PKM2-dependent manner. Regulates the diurnal rhythms of skeletal muscle metabolism via transcriptional activation of genes promoting triglyceride synthesis (DGAT2) and metabolic efficiency (COQ10B). This Mus musculus (Mouse) protein is Basic helix-loop-helix ARNT-like protein 1 (Bmal1).